Reading from the N-terminus, the 276-residue chain is NAD(+)--dinitrogen-reductase ADP-D-ribosyltransferase (276 aa).

Monomer.

It carries out the reaction L-arginyl-[dinitrogen reductase] + NAD(+) = N(omega)-alpha-(ADP-D-ribosyl)-L-arginyl-[dinitrogen reductase] + nicotinamide + H(+). Involved in the regulation of the nitrogen fixation activity by the reversible ADP-ribosylation of the dinitrogenase reductase component of the nitrogenase enzyme complex. The ADP-ribosyltransferase (DraT) transfers the ADP-ribose group from NAD to dinitrogenase reductase. The ADP-ribose group is removed through the action of the ADP-ribosylglycohydrolase (DraG). This is NAD(+)--dinitrogen-reductase ADP-D-ribosyltransferase (draT) from Rhodospirillum rubrum.